Here is a 295-residue protein sequence, read N- to C-terminus: Shikimate dehydrogenase (NADP(+)) (295 aa).

Residues 20–22 (SWS) and threonine 68 contribute to the shikimate site. The active-site Proton acceptor is the lysine 72. Shikimate-binding residues include asparagine 93 and aspartate 108. NADP(+)-binding positions include 132 to 136 (GNGGA) and methionine 234. Position 236 (tyrosine 236) interacts with shikimate. Residue glycine 257 coordinates NADP(+).

Belongs to the shikimate dehydrogenase family. Homodimer.

It carries out the reaction shikimate + NADP(+) = 3-dehydroshikimate + NADPH + H(+). It functions in the pathway metabolic intermediate biosynthesis; chorismate biosynthesis; chorismate from D-erythrose 4-phosphate and phosphoenolpyruvate: step 4/7. Its function is as follows. Involved in the biosynthesis of the chorismate, which leads to the biosynthesis of aromatic amino acids. Catalyzes the reversible NADPH linked reduction of 3-dehydroshikimate (DHSA) to yield shikimate (SA). This Chlorobaculum tepidum (strain ATCC 49652 / DSM 12025 / NBRC 103806 / TLS) (Chlorobium tepidum) protein is Shikimate dehydrogenase (NADP(+)).